A 70-amino-acid chain; its full sequence is UPF0337 protein BT9727_3385 (70 aa).

Belongs to the UPF0337 (CsbD) family.

The polypeptide is UPF0337 protein BT9727_3385 (Bacillus thuringiensis subsp. konkukian (strain 97-27)).